The following is a 408-amino-acid chain: MFALPQAGDRRGEIIKVLLSNGWDYMNGLLTLGKVGEPQIPTPEVLTKILVELGPFYIKLGQLLSTRPDLLPPRYINALTALQSNVPPLPWSAIEDLLQREFPQPLGETFQEIESEPIAAGSIGQIHRAVLQSGETVAIKVKRPGIDVIVEQDSLLIKDVAELLALTEFGQNYDIVKLADEFTQTVKAELNFDTEAAYTNNLRTNLAKTTWFDPNQLVIPKVYWELTNQKFLVLEWLDGVPILTADLTQPPSDKDIAEKKKEITTLLFRAFFQQLYVDGFFHADPHPGNIFYLADGRLALIDCGMVGRLDPRTRQLLTEMLLAIVDLDAKRCAQLTVELSESVGRVNFQRLEVDYERMLRKYYDLSLSEFNFSEVVYEFLRIARVNKLKVPACLGLYAKCLANLEGAG.

Belongs to the protein kinase superfamily. ADCK protein kinase family.

This is an uncharacterized protein from Synechocystis sp. (strain ATCC 27184 / PCC 6803 / Kazusa).